We begin with the raw amino-acid sequence, 352 residues long: UDP-N-acetylglucosamine--N-acetylmuramyl-(pentapeptide) pyrophosphoryl-undecaprenol N-acetylglucosamine transferase 2 (352 aa).

Residues 11-13 (SAG), R164, S194, and Q289 each bind UDP-N-acetyl-alpha-D-glucosamine.

Belongs to the glycosyltransferase 28 family. MurG subfamily.

The protein localises to the cell membrane. The enzyme catalyses di-trans,octa-cis-undecaprenyl diphospho-N-acetyl-alpha-D-muramoyl-L-alanyl-D-glutamyl-meso-2,6-diaminopimeloyl-D-alanyl-D-alanine + UDP-N-acetyl-alpha-D-glucosamine = di-trans,octa-cis-undecaprenyl diphospho-[N-acetyl-alpha-D-glucosaminyl-(1-&gt;4)]-N-acetyl-alpha-D-muramoyl-L-alanyl-D-glutamyl-meso-2,6-diaminopimeloyl-D-alanyl-D-alanine + UDP + H(+). Its pathway is cell wall biogenesis; peptidoglycan biosynthesis. Cell wall formation. Catalyzes the transfer of a GlcNAc subunit on undecaprenyl-pyrophosphoryl-MurNAc-pentapeptide (lipid intermediate I) to form undecaprenyl-pyrophosphoryl-MurNAc-(pentapeptide)GlcNAc (lipid intermediate II). This is UDP-N-acetylglucosamine--N-acetylmuramyl-(pentapeptide) pyrophosphoryl-undecaprenol N-acetylglucosamine transferase 2 from Bacillus cereus (strain ATCC 10987 / NRS 248).